The chain runs to 274 residues: Proliferating cell nuclear antigen 1 (274 aa).

A DNA-binding region spans residues 61 to 80 (RCDRERVLGVNIASLNKVFK).

This sequence belongs to the PCNA family. Homotrimer. Interacts with ORC1 (via PIP-box motif); the interaction occurs during DNA replication in trophozoites. Interacts with ORC5; the interaction occurs during the trophozoite stage but not at the late schizont stage. Interacts with FEN1.

Its subcellular location is the nucleus. It localises to the chromosome. The protein resides in the cytoplasm. Its function is as follows. Auxiliary protein of DNA polymerase delta and is involved in the control of DNA replication by increasing the polymerase processibility during elongation of the leading strand. Involved in DNA damage response. This chain is Proliferating cell nuclear antigen 1, found in Plasmodium falciparum (isolate 3D7).